Reading from the N-terminus, the 365-residue chain is DNA replication and repair protein RecF (365 aa).

30–37 (GRNAQGKT) serves as a coordination point for ATP.

The protein belongs to the RecF family.

Its subcellular location is the cytoplasm. Functionally, the RecF protein is involved in DNA metabolism; it is required for DNA replication and normal SOS inducibility. RecF binds preferentially to single-stranded, linear DNA. It also seems to bind ATP. The protein is DNA replication and repair protein RecF of Streptococcus pneumoniae (strain 70585).